The chain runs to 120 residues: NAD(P)H-quinone oxidoreductase subunit 3 (120 aa).

3 helical membrane-spanning segments follow: residues 10 to 30, 64 to 84, and 89 to 109; these read FLGF…TNLI, MFAL…PWAV, and LGLL…IALA.

It belongs to the complex I subunit 3 family. In terms of assembly, NDH-1 can be composed of about 15 different subunits; different subcomplexes with different compositions have been identified which probably have different functions.

Its subcellular location is the cellular thylakoid membrane. The catalysed reaction is a plastoquinone + NADH + (n+1) H(+)(in) = a plastoquinol + NAD(+) + n H(+)(out). It carries out the reaction a plastoquinone + NADPH + (n+1) H(+)(in) = a plastoquinol + NADP(+) + n H(+)(out). In terms of biological role, NDH-1 shuttles electrons from an unknown electron donor, via FMN and iron-sulfur (Fe-S) centers, to quinones in the respiratory and/or the photosynthetic chain. The immediate electron acceptor for the enzyme in this species is believed to be plastoquinone. Couples the redox reaction to proton translocation, and thus conserves the redox energy in a proton gradient. Cyanobacterial NDH-1 also plays a role in inorganic carbon-concentration. The polypeptide is NAD(P)H-quinone oxidoreductase subunit 3 (Prochlorococcus marinus (strain MIT 9215)).